The following is a 540-amino-acid chain: Hexose transporter HXT14 (540 aa).

Residues 1 to 56 lie on the Cytoplasmic side of the membrane; the sequence is MTAQIPYQHSSGYISHFHNNELDAGRGRDYNVTIKYLDDKEENIEGQAAKISHNAS. Residues 57–76 form a helical membrane-spanning segment; that stretch reads LHIPVLLCLVISLGGFIFGW. Residues 77 to 119 are Extracellular-facing; sequence DIGTIGGMTNMVSFQEKFGTTNIIHDDETIFVSTKKLTDLQIG. The chain crosses the membrane as a helical span at residues 120-140; the sequence is LIISIFNISCGVGALTLSKIG. At 141–146 the chain is on the cytoplasmic side; sequence DWIGRK. A helical membrane pass occupies residues 147–167; sequence GGIWFALVVYCIGITIQILSY. Residues 168–177 lie on the Extracellular side of the membrane; it reads GRWYFLTLGR. A helical membrane pass occupies residues 178–198; the sequence is AVTGIGVGVTTVLVPMFLSEN. Residues 199–204 lie on the Cytoplasmic side of the membrane; that stretch reads SPLKIR. Residues 205–225 form a helical membrane-spanning segment; it reads GSMVSTYQLIVTFGILMGNIL. Topologically, residues 226-243 are extracellular; sequence NFICERCYKDPTQNIAWQ. A helical membrane pass occupies residues 244-264; it reads LPLFLGYIWAIIIGMSLVYVP. The Cytoplasmic portion of the chain corresponds to 265–357; that stretch reads ESPQYLAKIK…IMAFQQLSGI (93 aa). A helical membrane pass occupies residues 358–374; sequence NYFFYYGTSVFKGVGIK. Over 375–380 the chain is Extracellular; it reads DPYITS. Residues 381-398 traverse the membrane as a helical segment; it reads IILSSVNFLSTILGIYYV. Residues 399–405 are Cytoplasmic-facing; it reads EKWGHKT. Residues 406-426 form a helical membrane-spanning segment; it reads CLLYGSTNLLFYMMTYATVGT. Residues 427–440 lie on the Extracellular side of the membrane; the sequence is FGRETDFSNIVLII. Residues 441 to 461 form a helical membrane-spanning segment; sequence VTCCFIFWFAITLGPVTFVLV. Topologically, residues 462 to 478 are cytoplasmic; sequence SELFPLRTRAISMAICT. Residues 479–499 traverse the membrane as a helical segment; the sequence is FINWMFNFLISLLTPMIVSKI. A topological domain (extracellular) is located at residue aspartate 500. The helical transmembrane segment at 501–521 threads the bilayer; the sequence is FKLGYIFAACLLALIIFSWIL. Residues 522–540 lie on the Cytoplasmic side of the membrane; the sequence is VPETRKKNEQEINKIFEPE.

It belongs to the major facilitator superfamily. Sugar transporter (TC 2.A.1.1) family.

The protein localises to the membrane. Its function is as follows. Probable glucose transporter. This is Hexose transporter HXT14 (HXT14) from Saccharomyces cerevisiae (strain ATCC 204508 / S288c) (Baker's yeast).